The sequence spans 329 residues: Malate dehydrogenase (329 aa).

Gly13–Ser19 contributes to the NAD(+) binding site. Arg94 and Arg100 together coordinate substrate. Residues Asn107, Gln114, and Val131–Asn133 each bind NAD(+). 2 residues coordinate substrate: Asn133 and Arg164. The active-site Proton acceptor is the His189.

Belongs to the LDH/MDH superfamily. MDH type 2 family.

It catalyses the reaction (S)-malate + NAD(+) = oxaloacetate + NADH + H(+). Functionally, catalyzes the reversible oxidation of malate to oxaloacetate. The polypeptide is Malate dehydrogenase (Psychrobacter arcticus (strain DSM 17307 / VKM B-2377 / 273-4)).